The sequence spans 1939 residues: MSSDSEMAIFGEAAPFLRKSERERIEAQNKPFDAKTSVFVVDPKESFVKATVQSREGGKVTAKTEAGATVTVKDDQVFPMNPPKYDKIEDMAMMTHLHEPAVLYNLKERYAAWMIYTYSGLFCVTVNPYKWLPVYNAEVVTAYRGKKRQEAPPHIFSISDNAYQFMLTDRENQSILITGESGAGKTVNTKRVIQYFATIAVTGEKKKEEVTSGKMQGTLEDQIISANPLLEAFGNAKTVRNDNSSRFGKFIRIHFGTTGKLASADIETYLLEKSRVTFQLKAERSYHIFYQIMSNKKPDLIEMLLITTNPYDYAFVSQGEITVPSIDDQEELMATDSAIEILGFTSDERVSIYKLTGAVMHYGNMKFKQKQREEQAEPDGTEVADKAAYLQNLNSADLLKALCYPRVKVGNEYVTKGQTVQQVYNAVGALAKAVYDKMFLWMVTRINQQLDTKQPRQYFIGVLDIAGFEIFDFNSLEQLCINFTNEKLQQFFNHHMFVLEQEEYKKEGIEWTFIDFGMDLAACIELIEKPMGIFSILEEECMFPKATDTSFKNKLYEQHLGKSNNFQKPKPAKGKPEAHFSLIHYAGTVDYNIAGWLDKNKDPLNETVVGLYQKSAMKTLALLFVGATGAEAEAGGGKKGGKKKGSSFQTVSALFRENLNKLMTNLRSTHPHFVRCIIPNETKTPGAMEHELVLHQLRCNGVLEGIRICRKGFPSRILYADFKQRYKVLNASAIPEGQFIDSKKASEKLLGSIDIDHTQYKFGHTKVFFKAGLLGLLEEMRDEKLAQLITRTQAMCRGFLARVEYQKMVERRESIFCIQYNVRAFMNVKHWPWMKLYFKIKPLLKSAETEKEMANMKEEFEKTKEELAKTEAKRKELEEKMVTLMQEKNDLQLQVQAEADSLADAEERCDQLIKTKIQLEAKIKEVTERAEDEEEINAELTAKKRKLEDECSELKKDIDDLELTLAKVEKEKHATENKVKNLTEEMAGLDETIAKLTKEKKALQEAHQQTLDDLQAEEDKVNTLTKAKIKLEQQVDDLEGSLEQEKKIRMDLERAKRKLEGDLKLAQESTMDIENDKQQLDEKLKKKEFEMSGLQSKIEDEQALGMQLQKKIKELQARIEELEEEIEAERASRAKAEKQRSDLSRELEEISERLEEAGGATSAQIEMNKKREAEFQKMRRDLEEATLQHEATAATLRKKHADSVAELGEQIDNLQRVKQKLEKEKSEMKMEIDDLASNMETVSKAKGNLEKMCRALEDQLSEIKTKEEEQQRLINDLTAQRARLQTESGEYSRQLDEKDTLVSQLSRGKQAFTQQIEELKRQLEEEIKAKSALAHALQSSRHDCDLLREQYEEEQEAKAELQRAMSKANSEVAQWRTKYETDAIQRTEELEEAKKKLAQRLQDAEEHVEAVNAKCASLEKTKQRLQNEVEDLMIDVERTNAACAALDKKQRNFDKILAEWKQKCEETHAELEASQKESRSLSTELFKIKNAYEESLDQLETLKRENKNLQQEISDLTEQIAEGGKRIHELEKIKKQVEQEKSELQAALEEAEASLEHEEGKILRIQLELNQVKSEVDRKIAEKDEEIDQMKRNHIRIVESMQSTLDAEIRSRNDAIRLKKKMEGDLNEMEIQLNHANRMAAEALRNYRNTQAILKDTQLHLDDALRSQEDLKEQLAMVERRANLLQAEIEELRATLEQTERSRKIAEQELLDASERVQLLHTQNTSLINTKKKLETDISQIQGEMEDIIQEARNAEEKAKKAITDAAMMAEELKKEQDTSAHLERMKKNLEQTVKDLQHRLDEAEQLALKGGKKQIQKLEARVRELEGEVESEQKRNVEAVKGLRKHERKVKELTYQTEEDRKNILRLQDLVDKLQAKVKSYKRQAEEAEEQSNVNLSKFRRIQHELEEAEERADIAESQVNKLRVKSREVHTKIISEE.

A Myosin N-terminal SH3-like domain is found at 33-82 (DAKTSVFVVDPKESFVKATVQSREGGKVTAKTEAGATVTVKDDQVFPMNP). Thr64 and Thr69 each carry phosphothreonine. The Myosin motor domain occupies 86-782 (DKIEDMAMMT…LLGLLEEMRD (697 aa)). Lys130 carries the N6,N6,N6-trimethyllysine modification. 179 to 186 (GESGAGKT) contributes to the ATP binding site. Tyr389 carries the phosphotyrosine modification. Position 419 is a phosphothreonine (Thr419). At Tyr424 the chain carries Phosphotyrosine. An actin-binding region spans residues 659 to 681 (LNKLMTNLRSTHPHFVRCIIPNE). His757 bears the Pros-methylhistidine mark. Residues 761–775 (KFGHTKVFFKAGLLG) form an actin-binding region. An IQ domain is found at 785–814 (LAQLITRTQAMCRGFLARVEYQKMVERRES). Residues 843–1939 (LLKSAETEKE…EVHTKIISEE (1097 aa)) adopt a coiled-coil conformation. Phosphoserine is present on residues Ser1092, Ser1096, Ser1162, and Ser1237. Thr1241 carries the post-translational modification Phosphothreonine. Phosphoserine occurs at positions 1243 and 1261. Phosphothreonine is present on residues Thr1265 and Thr1286. Phosphoserine is present on residues Ser1288, Ser1292, Ser1303, and Ser1306. Thr1467 is subject to Phosphothreonine. The residue at position 1474 (Ser1474) is a Phosphoserine. At Tyr1492 the chain carries Phosphotyrosine. Phosphoserine is present on Ser1495. Thr1501 bears the Phosphothreonine mark. The residue at position 1514 (Ser1514) is a Phosphoserine. Residue Thr1517 is modified to Phosphothreonine. Ser1542, Ser1554, Ser1574, Ser1600, Ser1603, Ser1714, and Ser1726 each carry phosphoserine. Phosphothreonine occurs at positions 1730 and 1736. Ser1739 is modified (phosphoserine).

This sequence belongs to the TRAFAC class myosin-kinesin ATPase superfamily. Myosin family. Muscle myosin is a hexameric protein that consists of 2 heavy chain subunits (MHC), 2 alkali light chain subunits (MLC) and 2 regulatory light chain subunits (MLC-2). Interacts with SLC26A5.

The protein localises to the cytoplasm. It is found in the myofibril. Its function is as follows. Required for normal hearing. It plays a role in cochlear amplification of auditory stimuli, likely through the positive regulation of prestin (SLC26A5) activity and outer hair cell (OHC) electromotility. This chain is Myosin-1, found in Homo sapiens (Human).